The sequence spans 442 residues: tRNA-2-methylthio-N(6)-dimethylallyladenosine synthase (442 aa).

The 118-residue stretch at 5-122 (KKVFIKTLGC…LPEMIKQKQK (118 aa)) folds into the MTTase N-terminal domain. [4Fe-4S] cluster contacts are provided by cysteine 14, cysteine 51, cysteine 85, cysteine 159, cysteine 163, and cysteine 166. The Radical SAM core domain maps to 145 to 378 (KAEGAKAYVS…DLLNSNAQII (234 aa)). One can recognise a TRAM domain in the interval 380–442 (RQMVGTNQRI…LPNSLRGELI (63 aa)).

It belongs to the methylthiotransferase family. MiaB subfamily. As to quaternary structure, monomer. Requires [4Fe-4S] cluster as cofactor.

It localises to the cytoplasm. The enzyme catalyses N(6)-dimethylallyladenosine(37) in tRNA + (sulfur carrier)-SH + AH2 + 2 S-adenosyl-L-methionine = 2-methylsulfanyl-N(6)-dimethylallyladenosine(37) in tRNA + (sulfur carrier)-H + 5'-deoxyadenosine + L-methionine + A + S-adenosyl-L-homocysteine + 2 H(+). In terms of biological role, catalyzes the methylthiolation of N6-(dimethylallyl)adenosine (i(6)A), leading to the formation of 2-methylthio-N6-(dimethylallyl)adenosine (ms(2)i(6)A) at position 37 in tRNAs that read codons beginning with uridine. This is tRNA-2-methylthio-N(6)-dimethylallyladenosine synthase from Francisella tularensis subsp. tularensis (strain FSC 198).